We begin with the raw amino-acid sequence, 103 residues long: Cystatin-A1 (103 aa).

The short motif at 51 to 55 (QVVAG) is the Secondary area of contact element.

The protein belongs to the cystatin family.

It localises to the cytoplasm. Functionally, this is an intracellular thiol proteinase inhibitor. The sequence is that of Cystatin-A1 from Sus scrofa (Pig).